The chain runs to 158 residues: NADH-quinone oxidoreductase subunit B (158 aa).

Cys-37, Cys-38, Cys-102, and Cys-132 together coordinate [4Fe-4S] cluster.

The protein belongs to the complex I 20 kDa subunit family. NDH-1 is composed of 14 different subunits. Subunits NuoB, C, D, E, F, and G constitute the peripheral sector of the complex. Requires [4Fe-4S] cluster as cofactor.

It localises to the cell inner membrane. The catalysed reaction is a quinone + NADH + 5 H(+)(in) = a quinol + NAD(+) + 4 H(+)(out). NDH-1 shuttles electrons from NADH, via FMN and iron-sulfur (Fe-S) centers, to quinones in the respiratory chain. Couples the redox reaction to proton translocation (for every two electrons transferred, four hydrogen ions are translocated across the cytoplasmic membrane), and thus conserves the redox energy in a proton gradient. This is NADH-quinone oxidoreductase subunit B from Alkalilimnicola ehrlichii (strain ATCC BAA-1101 / DSM 17681 / MLHE-1).